The sequence spans 435 residues: Serine/threonine-protein kinase ssn3 (435 aa).

Positions 49 to 377 constitute a Protein kinase domain; sequence YRIVGFISSG…AREALEHPYF (329 aa). Residues 55-63 and lysine 79 each bind ATP; that span reads ISSGTYGRV. Aspartate 181 functions as the Proton acceptor in the catalytic mechanism. The span at 398 to 407 shows a compositional bias: basic and acidic residues; that stretch reads RRVTQDDNDI. The disordered stretch occupies residues 398–435; that stretch reads RRVTQDDNDIRSGSLPGTKRSGLPDDSLMGRASKRIKE.

The protein belongs to the protein kinase superfamily. CMGC Ser/Thr protein kinase family. CDC2/CDKX subfamily. Component of the srb8-11 complex, a regulatory module of the Mediator complex. Mg(2+) is required as a cofactor.

It is found in the nucleus. It catalyses the reaction L-seryl-[protein] + ATP = O-phospho-L-seryl-[protein] + ADP + H(+). It carries out the reaction L-threonyl-[protein] + ATP = O-phospho-L-threonyl-[protein] + ADP + H(+). The enzyme catalyses [DNA-directed RNA polymerase] + ATP = phospho-[DNA-directed RNA polymerase] + ADP + H(+). In terms of biological role, component of the srb8-11 complex. The srb8-11 complex is a regulatory module of the Mediator complex which is itself involved in regulation of basal and activated RNA polymerase II-dependent transcription. The srb8-11 complex may be involved in the transcriptional repression of a subset of genes regulated by Mediator. It may inhibit the association of the Mediator complex with RNA polymerase II to form the holoenzyme complex. The srb8-11 complex phosphorylates the C-terminal domain (CTD) of the largest subunit of RNA polymerase II. In Aspergillus terreus (strain NIH 2624 / FGSC A1156), this protein is Serine/threonine-protein kinase ssn3 (ssn3).